Consider the following 251-residue polypeptide: Ditrans,polycis-undecaprenyl-diphosphate synthase ((2E,6E)-farnesyl-diphosphate specific) (251 aa).

Asp-21 is an active-site residue. Asp-21 provides a ligand contact to Mg(2+). Substrate-binding positions include 22–25, Trp-26, His-38, and 66–68; these read GNNR and SSE. Asn-69 serves as the catalytic Proton acceptor. Residues Trp-70, Arg-72, Arg-189, and 195–197 each bind substrate; that span reads RIS. Residue Glu-208 participates in Mg(2+) binding.

The protein belongs to the UPP synthase family. Homodimer. Mg(2+) serves as cofactor.

It catalyses the reaction 8 isopentenyl diphosphate + (2E,6E)-farnesyl diphosphate = di-trans,octa-cis-undecaprenyl diphosphate + 8 diphosphate. Its function is as follows. Catalyzes the sequential condensation of isopentenyl diphosphate (IPP) with (2E,6E)-farnesyl diphosphate (E,E-FPP) to yield (2Z,6Z,10Z,14Z,18Z,22Z,26Z,30Z,34E,38E)-undecaprenyl diphosphate (di-trans,octa-cis-UPP). UPP is the precursor of glycosyl carrier lipid in the biosynthesis of bacterial cell wall polysaccharide components such as peptidoglycan and lipopolysaccharide. The polypeptide is Ditrans,polycis-undecaprenyl-diphosphate synthase ((2E,6E)-farnesyl-diphosphate specific) (Pseudomonas putida (strain ATCC 47054 / DSM 6125 / CFBP 8728 / NCIMB 11950 / KT2440)).